A 425-amino-acid chain; its full sequence is High-affinity branched-chain amino acid transport system permease protein LivM (425 aa).

11 helical membrane-spanning segments follow: residues Ile6–Val26, Trp45–Phe65, Phe92–Val112, Ile120–Leu140, Phe145–Trp165, Cys167–Leu187, Gly191–Asn211, Arg260–Asn280, Ile311–Ala331, Ile353–Val373, and Leu388–Met408.

This sequence belongs to the binding-protein-dependent transport system permease family. LivHM subfamily.

Its subcellular location is the cell inner membrane. In terms of biological role, part of the binding-protein-dependent transport system for branched-chain amino acids. Probably responsible for the translocation of the substrates across the membrane. The sequence is that of High-affinity branched-chain amino acid transport system permease protein LivM (livM) from Salmonella typhimurium (strain LT2 / SGSC1412 / ATCC 700720).